The sequence spans 108 residues: ATP synthase peripheral stalk subunit F6, mitochondrial (108 aa).

The transit peptide at 1–32 (MVLQRIFRLSSVLRSAVSVHLKRNIGVTAVAF) directs the protein to the mitochondrion. N6-acetyllysine is present on residues K41, K46, and K79. Residues K84, K94, and K99 each carry the N6-acetyllysine; alternate modification. K84, K94, and K99 each carry N6-succinyllysine; alternate. The residue at position 105 (K105) is an N6-acetyllysine. Position 108 is a phosphoserine (S108).

It belongs to the eukaryotic ATPase subunit F6 family. In terms of assembly, component of the ATP synthase complex composed at least of ATP5F1A/subunit alpha, ATP5F1B/subunit beta, ATP5MC1/subunit c (homooctomer), MT-ATP6/subunit a, MT-ATP8/subunit 8, ATP5ME/subunit e, ATP5MF/subunit f, ATP5MG/subunit g, ATP5MK/subunit k, ATP5MJ/subunit j, ATP5F1C/subunit gamma, ATP5F1D/subunit delta, ATP5F1E/subunit epsilon, ATP5PF/subunit F6, ATP5PB/subunit b, ATP5PD/subunit d, ATP5PO/subunit OSCP. ATP synthase complex consists of a soluble F(1) head domain (subunits alpha(3) and beta(3)) - the catalytic core - and a membrane F(0) domain - the membrane proton channel (subunits c, a, 8, e, f, g, k and j). These two domains are linked by a central stalk (subunits gamma, delta, and epsilon) rotating inside the F1 region and a stationary peripheral stalk (subunits F6, b, d, and OSCP).

The protein resides in the mitochondrion. Its subcellular location is the mitochondrion inner membrane. Subunit F6, of the mitochondrial membrane ATP synthase complex (F(1)F(0) ATP synthase or Complex V) that produces ATP from ADP in the presence of a proton gradient across the membrane which is generated by electron transport complexes of the respiratory chain. ATP synthase complex consist of a soluble F(1) head domain - the catalytic core - and a membrane F(1) domain - the membrane proton channel. These two domains are linked by a central stalk rotating inside the F(1) region and a stationary peripheral stalk. During catalysis, ATP synthesis in the catalytic domain of F(1) is coupled via a rotary mechanism of the central stalk subunits to proton translocation. In vivo, can only synthesize ATP although its ATP hydrolase activity can be activated artificially in vitro. Part of the complex F(0) domain. Part of the complex F(0) domain and the peripheric stalk, which acts as a stator to hold the catalytic alpha(3)beta(3) subcomplex and subunit a/ATP6 static relative to the rotary elements. This Mus musculus (Mouse) protein is ATP synthase peripheral stalk subunit F6, mitochondrial.